We begin with the raw amino-acid sequence, 75 residues long: Large ribosomal subunit protein bL31 (75 aa).

It belongs to the bacterial ribosomal protein bL31 family. Type A subfamily. As to quaternary structure, part of the 50S ribosomal subunit.

In terms of biological role, binds the 23S rRNA. This is Large ribosomal subunit protein bL31 from Bradyrhizobium sp. (strain BTAi1 / ATCC BAA-1182).